We begin with the raw amino-acid sequence, 203 residues long: uncharacterized protein (203 aa).

This is an uncharacterized protein from Archaeoglobus fulgidus (strain ATCC 49558 / DSM 4304 / JCM 9628 / NBRC 100126 / VC-16).